We begin with the raw amino-acid sequence, 247 residues long: Membrane-spanning 4-domains subfamily A member 6D (247 aa).

Residues 1-46 (MIPQVVTSETVTVISPNGISFPQTDKPQPSHQSQDSLKKHLKAEIK) lie on the Cytoplasmic side of the membrane. The chain crosses the membrane as a helical span at residues 47–67 (VMAAIQIMCAVMVLSLGIILA). Residues 68–80 (SVPSNLHFTSVFS) are Extracellular-facing. Residues 81-101 (ILLESGYPFVGALFFAISGIL) traverse the membrane as a helical segment. Residues 102 to 121 (SIVTEKKMTKPLVHSSLALS) lie on the Cytoplasmic side of the membrane. A helical transmembrane segment spans residues 122 to 142 (ILSVLSALTGIAILSVSLAAL). The Extracellular segment spans residues 143–180 (EPALQQCKLAFTQLDTTQDAYHFFSPEPLNSCFVAKAA). The chain crosses the membrane as a helical span at residues 181–201 (LTGVFSLMLISSVLELGLAVL). At 202–247 (TATLWWKQSSSAFSGNVIFLSQNSKNKSSVSSESLCNPTYENILTS) the chain is on the cytoplasmic side. At Ser-235 the chain carries Phosphoserine.

This sequence belongs to the MS4A family. In terms of tissue distribution, expressed in thymus, spleen, intestine, colon, testis, heart, liver, brain, kidney, peripheral lymph node and bone marrow.

The protein localises to the membrane. May be involved in signal transduction as a component of a multimeric receptor complex. The chain is Membrane-spanning 4-domains subfamily A member 6D (Ms4a6d) from Mus musculus (Mouse).